A 464-amino-acid chain; its full sequence is Argininosuccinate lyase (464 aa).

The residue at position 2 (alanine 2) is an N-acetylalanine. Lysine 7 carries the N6-acetyllysine modification. Residue serine 27 participates in 2-(N(omega)-L-arginino)succinate binding. At lysine 69 the chain carries N6-acetyllysine. Residues asparagine 114 and threonine 159 each coordinate 2-(N(omega)-L-arginino)succinate. The active-site Proton acceptor is histidine 160. The active-site Proton donor is the serine 281. Lysine 288 is modified (N6-acetyllysine). Residues asparagine 289, tyrosine 321, glutamine 326, and lysine 329 each contribute to the 2-(N(omega)-L-arginino)succinate site.

The protein belongs to the lyase 1 family. Argininosuccinate lyase subfamily. Homotetramer. Forms tissue-specific complexes with ASS1, SLC7A1, HSP90AA1 and nitric oxide synthase NOS1, NOS2 or NOS3; the complex maintenance is independent of ASL catalytic function. Acetylation modifies enzyme activity in response to alterations of extracellular nutrient availability. Acetylation increased with trichostin A (TSA) or with nicotinamide (NAM). Glucose increases acetylation by about a factor of 3 with decreasing enzyme activity. Acetylation on Lys-288 is decreased on the addition of extra amino acids resulting in activation of enzyme activity. As to expression, expressed in lung and brain (at protein level).

The enzyme catalyses 2-(N(omega)-L-arginino)succinate = fumarate + L-arginine. It participates in amino-acid biosynthesis; L-arginine biosynthesis; L-arginine from L-ornithine and carbamoyl phosphate: step 3/3. The protein operates within nitrogen metabolism; urea cycle; L-arginine and fumarate from (N(omega)-L-arginino)succinate: step 1/1. Enzyme activity is regulated by acetylation. Its function is as follows. Catalyzes the reversible cleavage of L-argininosuccinate to fumarate and L-arginine, an intermediate step reaction in the urea cycle mostly providing for hepatic nitrogen detoxification into excretable urea as well as de novo L-arginine synthesis in nonhepatic tissues. Essential regulator of intracellular and extracellular L-arginine pools. As part of citrulline-nitric oxide cycle, forms tissue-specific multiprotein complexes with argininosuccinate synthase ASS1, transport protein SLC7A1 and nitric oxide synthase NOS1, NOS2 or NOS3, allowing for cell-autonomous L-arginine synthesis while channeling extracellular L-arginine to nitric oxide synthesis pathway. The protein is Argininosuccinate lyase (Asl) of Mus musculus (Mouse).